A 223-amino-acid polypeptide reads, in one-letter code: Cytidylate kinase (223 aa).

11–19 is an ATP binding site; it reads GPAGVGKST.

The protein belongs to the cytidylate kinase family. Type 1 subfamily.

The protein resides in the cytoplasm. The enzyme catalyses CMP + ATP = CDP + ADP. It carries out the reaction dCMP + ATP = dCDP + ADP. In Maridesulfovibrio salexigens (strain ATCC 14822 / DSM 2638 / NCIMB 8403 / VKM B-1763) (Desulfovibrio salexigens), this protein is Cytidylate kinase.